A 449-amino-acid polypeptide reads, in one-letter code: Phosphoglucosamine mutase (449 aa).

The active-site Phosphoserine intermediate is serine 100. Positions 100, 241, 243, and 245 each coordinate Mg(2+). A Phosphoserine modification is found at serine 100.

Belongs to the phosphohexose mutase family. Mg(2+) is required as a cofactor. Post-translationally, activated by phosphorylation.

It catalyses the reaction alpha-D-glucosamine 1-phosphate = D-glucosamine 6-phosphate. In terms of biological role, catalyzes the conversion of glucosamine-6-phosphate to glucosamine-1-phosphate. In Geobacillus kaustophilus (strain HTA426), this protein is Phosphoglucosamine mutase.